Here is a 311-residue protein sequence, read N- to C-terminus: Progestin and adipoQ receptor family member 3 (311 aa).

The segment at 1 to 20 is required for interaction with SREBF2; sequence MHQKLLKSAHYIELGSYQYW. The Cytoplasmic segment spans residues 1 to 70; that stretch reads MHQKLLKSAH…KSLFILSNET (70 aa). The interval 41-60 is required for interaction with SCAP; that stretch reads KDNPYITDGYRAYLPSRLCI. Residues 61–71 form a golgi targeting region; it reads KSLFILSNETV. A helical transmembrane segment spans residues 71–91; the sequence is VNIWSHLLGFFLFFTLGIYDM. Residues 92–104 are Lumenal-facing; sequence TSVLPSASASRED. A helical transmembrane segment spans residues 105–125; that stretch reads FVICSICLFCFQVCMLCSVGY. The Cytoplasmic segment spans residues 126-145; that stretch reads HLFSCHRSEKTCRRWMALDY. Residues 146–166 form a helical membrane-spanning segment; that stretch reads AGISIGILGCYVSGVFYAFYC. At 167 to 172 the chain is on the lumenal side; the sequence is NNYWRQ. The chain crosses the membrane as a helical span at residues 173–193; sequence VYLITVLAMILAVFFAQIHPS. The Cytoplasmic portion of the chain corresponds to 194 to 203; the sequence is YLTQQWQRLR. Residues 204–224 form a helical membrane-spanning segment; that stretch reads PIIFCSVSGYGVIPTLHWVWL. The Lumenal portion of the chain corresponds to 225 to 235; the sequence is NGGVSAPIVQD. The helical transmembrane segment at 236–256 threads the bilayer; sequence FAPRVIVMYVIALLAFLFYIS. Topologically, residues 257-275 are cytoplasmic; the sequence is KVPERYFPGQLNYLGSSHQ. The chain crosses the membrane as a helical span at residues 276–296; it reads IWHVLAVVMLYWWHQSTVYVM. The Lumenal portion of the chain corresponds to 297–311; the sequence is QYRHSKPCPDYVSHL. The segment at 299-303 is golgi targeting; it reads RHSKP.

This sequence belongs to the ADIPOR family. Interacts with SCAP and SREBF2; the interactions are direct, increase in low cholesterol conditions and tether SCAP:SREBP complex to the Golgi apparatus. Interaction with SCAP is mutually exclusive with INSIG1. In hepatocytes, interacts with PPARA and HUWE1; the interactions promote PPARA poylubiquitination and HUWE1-mediated degradation. In macrophages, interacts with PPARG and STUB1; the interactions promote PPARG poylubiquitination and STUB1-mediated degradation.

Its subcellular location is the golgi apparatus membrane. Golgi-anchored protein which modulates its interactors acitivies by tethering them to the Golgi apparatus. Functions as a spatial regulator of RAF1 kinase by sequestrating it to the Golgi apparatus. Acts as a positive regulator of cholesterol biosynthesis by mediating the anchoring of the SCAP:SREBP complex in the Golgi apparatus, thereby promoting SCAP:SREBF2 complex formation, potentiating SREBF2 and SREBF1 processing and enhancing lipid synthesis. Also regulates PPARA and PPARG functions by mediating their interaction with E3 ubiquitin ligases, such as STUB1 or HUWE1, leading to their polyubiquitination and proteasome-mediated degradation. This is Progestin and adipoQ receptor family member 3 from Mus musculus (Mouse).